The primary structure comprises 399 residues: Putative cytochrome P450 133B2 (399 aa).

C348 lines the heme pocket.

The protein belongs to the cytochrome P450 family. It depends on heme as a cofactor.

The polypeptide is Putative cytochrome P450 133B2 (cyp133B2) (Xylella fastidiosa (strain Temecula1 / ATCC 700964)).